The chain runs to 193 residues: Cbp/p300-interacting transactivator 1 (193 aa).

Disordered regions lie at residues 1–26 (MPTT…NQEM), 50–88 (VASN…LHPA), and 106–147 (GMAA…SPAI). Low complexity predominate over residues 54–73 (GTKASGAPTSSSGSPIGSPT). The short motif at 158–167 (LMSLVVELGL) is the Nuclear export signal element.

The protein belongs to the CITED family. Interacts (via C-terminus) with CREBBP. Interacts with EGR2. Homodimer. Binds to RBM14. Interacts (via N-terminus) with HSPA8; the interaction suppresses the association of CITED1 with p300/CBP and SMAD-mediated transcription transactivation. Interacts (via C-terminus) with TOX3 (via HGM box); the interaction increases estrogen-response element (ERE)-dependent transcription and protection against cell death. Interacts with ESR1; the interaction occurs in a estrogen-dependent manner. Interacts (unphosphorylated form preferentially and via C-terminus) with EP300. In terms of processing, phosphorylated. Phosphorylation changes in a cell cycle-dependent manner and reduces its transcriptional coactivator activity. In terms of tissue distribution, expressed only in melanocytes and testis.

The protein localises to the nucleus. Its subcellular location is the cytoplasm. Transcriptional coactivator of the p300/CBP-mediated transcription complex. Enhances SMAD-mediated transcription by strengthening the functional link between the DNA-binding SMAD transcription factors and the p300/CBP transcription coactivator complex. Stimulates estrogen-dependent transactivation activity mediated by estrogen receptors signaling; stabilizes the interaction of estrogen receptor ESR1 and histone acetyltransferase EP300. Positively regulates TGF-beta signaling through its association with the SMAD/p300/CBP-mediated transcriptional coactivator complex. Induces transcription from estrogen-responsive promoters and protection against cell death. Potentiates EGR2-mediated transcriptional activation activity from the ERBB2 promoter. Acts as an inhibitor of osteoblastic mineralization through a cAMP-dependent parathyroid hormone receptor signaling. May play a role in pigmentation of melanocytes. Associates with chromatin to the estrogen-responsive TGF-alpha promoter region in a estrogen-dependent manner. This chain is Cbp/p300-interacting transactivator 1 (CITED1), found in Homo sapiens (Human).